Reading from the N-terminus, the 592-residue chain is ATP-binding protein Uup (592 aa).

ABC transporter domains lie at 1-221 (MPLI…RIEK) and 289-516 (FKLK…KSNI). ATP is bound by residues 36–43 (GKNGAGKS) and 321–328 (GNNGSGKS). Residues 516–550 (ISFLKTKQNQVKKELKKVLNEIEKIENSIKTLKIQ) adopt a coiled-coil conformation. A C-terminal domain (CTD), binds DNA region spans residues 518-592 (FLKTKQNQVK…IYWENLEKKL (75 aa)).

It belongs to the ABC transporter superfamily. ABCF family. Uup subfamily.

It is found in the cytoplasm. It carries out the reaction ATP + H2O = ADP + phosphate + H(+). In terms of biological role, probably plays a role in ribosome assembly or function. May be involved in resolution of branched DNA intermediates that result from template switching in postreplication gaps. Binds DNA and has ATPase activity. This is ATP-binding protein Uup from Buchnera aphidicola subsp. Schizaphis graminum (strain Sg).